A 207-amino-acid polypeptide reads, in one-letter code: Outer-membrane lipoprotein LolB (207 aa).

The signal sequence occupies residues 1–21 (MPLPDFRLIRLLPLAALVLTA). Residue Cys-22 is the site of N-palmitoyl cysteine attachment. The S-diacylglycerol cysteine moiety is linked to residue Cys-22.

It belongs to the LolB family. Monomer.

The protein localises to the cell outer membrane. Plays a critical role in the incorporation of lipoproteins in the outer membrane after they are released by the LolA protein. The polypeptide is Outer-membrane lipoprotein LolB (Escherichia coli O7:K1 (strain IAI39 / ExPEC)).